Reading from the N-terminus, the 517-residue chain is MGAIDLSFSQSLLFSSSRSNLSSSTHRSVSFLPPGSKSRCLPPLRSMSHDDDTASKEVKLWGGRFEESVTEKVEKFTESISFDKVLYKQDIMGSKAHASMLAHQGLITDSDKDSILRGLDDIERQIEANKFEWRTDREDVHMNIEAALTDLIGEPAKKLHTARSRNDQVATDFRLWCRDAIDTIIVKIRNLQRALVELALKNEALIVPGYTHLQRAQPVLLPHVLLTFVEQLERDAGRYVDCRARLNFSPLGACALAGTGLPIDRFMTANALGFTEPMRNSIDAVSDRDFVLEFLYTNANTGIHLSRLGEEWVLWASEEFGFMTPSDSVSTGSSIMPQKKNPDPMELVRGKSARVIGDLVTVLTLCKGLPLAYNRDFQEDKEPMFDSTKTIMGMIDVSAEFAQNVTFNEDRIKKSLPAGHLDATTLADYLVKKGMPFRSSHDIVGKLVGVCVSKGCELQNLSLEEMKKLSPVFEEDVFGFLGVENSVNKFSSYGSTGSNCVAEQLGYWVNKLNITST.

A chloroplast-targeting transit peptide spans 1–45 (MGAIDLSFSQSLLFSSSRSNLSSSTHRSVSFLPPGSKSRCLPPLR). Residues S79, N166, and T211 each coordinate 2-(N(omega)-L-arginino)succinate. H212 (proton acceptor) is an active-site residue. Catalysis depends on S333, which acts as the Proton donor. The 2-(N(omega)-L-arginino)succinate site is built by N341, Y373, Q378, and K381.

This sequence belongs to the lyase 1 family. Argininosuccinate lyase subfamily.

The protein resides in the plastid. It localises to the chloroplast. The catalysed reaction is 2-(N(omega)-L-arginino)succinate = fumarate + L-arginine. It functions in the pathway amino-acid biosynthesis; L-arginine biosynthesis; L-arginine from L-ornithine and carbamoyl phosphate: step 3/3. The chain is Argininosuccinate lyase, chloroplastic from Arabidopsis thaliana (Mouse-ear cress).